An 860-amino-acid polypeptide reads, in one-letter code: Linoleate 9S-lipoxygenase A (860 aa).

A PLAT domain is found at 29-159 (NALDFTDLAG…RYKSDRIFFA (131 aa)). In terms of domain architecture, Lipoxygenase spans 162 to 860 (PYLPSETPEL…GKGIPNSVSI (699 aa)). The tract at residues 209–246 (PDQGKENVRTTLGGSADYPYPRRGRTGRPPTRTDPKSE) is disordered. His-521, His-526, His-712, Asn-716, and Ile-860 together coordinate Fe cation.

This sequence belongs to the lipoxygenase family. Monomer. It depends on Fe cation as a cofactor. In terms of tissue distribution, expressed in germinating seeds as well as in ripening fruit.

It is found in the cytoplasm. The enzyme catalyses (9Z,12Z)-octadecadienoate + O2 = (9S)-hydroperoxy-(10E,12Z)-octadecadienoate. Its pathway is lipid metabolism; oxylipin biosynthesis. Functionally, plant lipoxygenase may be involved in a number of diverse aspects of plant physiology including growth and development, pest resistance, and senescence or responses to wounding. It catalyzes the hydroperoxidation of lipids containing a cis,cis-1,4-pentadiene structure. This chain is Linoleate 9S-lipoxygenase A (LOX1.1), found in Solanum lycopersicum (Tomato).